A 142-amino-acid polypeptide reads, in one-letter code: Putative pre-16S rRNA nuclease (142 aa).

Belongs to the YqgF nuclease family.

The protein resides in the cytoplasm. Functionally, could be a nuclease involved in processing of the 5'-end of pre-16S rRNA. In Staphylococcus aureus (strain bovine RF122 / ET3-1), this protein is Putative pre-16S rRNA nuclease.